The chain runs to 485 residues: ATP synthase subunit beta (485 aa).

Over residues 1-11 (MPATETADKNT) the composition is skewed to basic and acidic residues. The tract at residues 1-20 (MPATETADKNTKSANSDTSG) is disordered. 170 to 177 (GGAGVGKT) is an ATP binding site.

It belongs to the ATPase alpha/beta chains family. In terms of assembly, F-type ATPases have 2 components, CF(1) - the catalytic core - and CF(0) - the membrane proton channel. CF(1) has five subunits: alpha(3), beta(3), gamma(1), delta(1), epsilon(1). CF(0) has three main subunits: a(1), b(2) and c(9-12). The alpha and beta chains form an alternating ring which encloses part of the gamma chain. CF(1) is attached to CF(0) by a central stalk formed by the gamma and epsilon chains, while a peripheral stalk is formed by the delta and b chains.

It localises to the cell membrane. The catalysed reaction is ATP + H2O + 4 H(+)(in) = ADP + phosphate + 5 H(+)(out). Its function is as follows. Produces ATP from ADP in the presence of a proton gradient across the membrane. The catalytic sites are hosted primarily by the beta subunits. This chain is ATP synthase subunit beta, found in Mycolicibacterium paratuberculosis (strain ATCC BAA-968 / K-10) (Mycobacterium paratuberculosis).